We begin with the raw amino-acid sequence, 219 residues long: Ribose-5-phosphate isomerase A (219 aa).

Substrate-binding positions include 28-31 (SGST), 81-84 (DGAD), and 94-97 (KGGG). Residue glutamate 103 is the Proton acceptor of the active site. Lysine 121 provides a ligand contact to substrate.

It belongs to the ribose 5-phosphate isomerase family. In terms of assembly, homodimer.

It carries out the reaction aldehydo-D-ribose 5-phosphate = D-ribulose 5-phosphate. It functions in the pathway carbohydrate degradation; pentose phosphate pathway; D-ribose 5-phosphate from D-ribulose 5-phosphate (non-oxidative stage): step 1/1. Its function is as follows. Catalyzes the reversible conversion of ribose-5-phosphate to ribulose 5-phosphate. The protein is Ribose-5-phosphate isomerase A of Haemophilus influenzae (strain PittGG).